Consider the following 943-residue polypeptide: Isoleucine--tRNA ligase (943 aa).

The short motif at 59-69 (PYANGQIHLGH) is the 'HIGH' region element. Glutamate 577 lines the L-isoleucyl-5'-AMP pocket. Positions 618–622 (KMSKS) match the 'KMSKS' region motif. Lysine 621 contacts ATP. Zn(2+)-binding residues include cysteine 906, cysteine 909, cysteine 926, and cysteine 929.

It belongs to the class-I aminoacyl-tRNA synthetase family. IleS type 1 subfamily. Monomer. Zn(2+) serves as cofactor.

It localises to the cytoplasm. The enzyme catalyses tRNA(Ile) + L-isoleucine + ATP = L-isoleucyl-tRNA(Ile) + AMP + diphosphate. In terms of biological role, catalyzes the attachment of isoleucine to tRNA(Ile). As IleRS can inadvertently accommodate and process structurally similar amino acids such as valine, to avoid such errors it has two additional distinct tRNA(Ile)-dependent editing activities. One activity is designated as 'pretransfer' editing and involves the hydrolysis of activated Val-AMP. The other activity is designated 'posttransfer' editing and involves deacylation of mischarged Val-tRNA(Ile). The polypeptide is Isoleucine--tRNA ligase (Xanthomonas campestris pv. campestris (strain 8004)).